A 237-amino-acid chain; its full sequence is Small ribosomal subunit protein uS3 (237 aa).

The region spanning 39–107 (IRAYLMEELK…ETHLNIVEVR (69 aa)) is the KH type-2 domain. A disordered region spans residues 213-237 (MASERRATESDNQGGSGRERRRENA).

It belongs to the universal ribosomal protein uS3 family. Part of the 30S ribosomal subunit. Forms a tight complex with proteins S10 and S14.

In terms of biological role, binds the lower part of the 30S subunit head. Binds mRNA in the 70S ribosome, positioning it for translation. The sequence is that of Small ribosomal subunit protein uS3 from Rhizobium meliloti (strain 1021) (Ensifer meliloti).